A 173-amino-acid polypeptide reads, in one-letter code: Flagellar biosynthetic protein FliV (173 aa).

The protein belongs to the FliB family.

Functionally, required for the secretion of flagellin and expression of motility. In Salmonella muenchen, this protein is Flagellar biosynthetic protein FliV (fliV).